The primary structure comprises 180 residues: Large ribosomal subunit protein uL6 (180 aa).

It belongs to the universal ribosomal protein uL6 family. In terms of assembly, part of the 50S ribosomal subunit.

In terms of biological role, this protein binds to the 23S rRNA, and is important in its secondary structure. It is located near the subunit interface in the base of the L7/L12 stalk, and near the tRNA binding site of the peptidyltransferase center. In Clostridium botulinum (strain Loch Maree / Type A3), this protein is Large ribosomal subunit protein uL6.